The sequence spans 116 residues: Putative membrane protein (116 aa).

The helical transmembrane segment at Val-13–Cys-33 threads the bilayer.

The protein resides in the host membrane. The chain is Putative membrane protein from Alethinophid 1 reptarenavirus (isolate AlRrV1/Boa/USA/BC/2009) (Golden Gate virus).